A 540-amino-acid chain; its full sequence is Membrane protein insertase YidC (540 aa).

A helical transmembrane segment spans residues 6-26 (NILLIALALVSFLLFQQWQVA). Residues 36-47 (QAQSSSSLPAPS) show a composition bias toward low complexity. Positions 36 to 63 (QAQSSSSLPAPSFADELDPVPGQQQASA) are disordered. A run of 4 helical transmembrane segments spans residues 342–362 (AFIQ…TFIV), 417–437 (LGGC…YWAL), 455–475 (LSAQ…MFLI), and 496–516 (PVMF…YWLV).

It belongs to the OXA1/ALB3/YidC family. Type 1 subfamily. Interacts with the Sec translocase complex via SecD. Specifically interacts with transmembrane segments of nascent integral membrane proteins during membrane integration.

It is found in the cell inner membrane. In terms of biological role, required for the insertion and/or proper folding and/or complex formation of integral membrane proteins into the membrane. Involved in integration of membrane proteins that insert both dependently and independently of the Sec translocase complex, as well as at least some lipoproteins. Aids folding of multispanning membrane proteins. The chain is Membrane protein insertase YidC from Vibrio parahaemolyticus serotype O3:K6 (strain RIMD 2210633).